We begin with the raw amino-acid sequence, 412 residues long: 2,3-bisphosphoglycerate-independent phosphoglycerate mutase (412 aa).

Belongs to the BPG-independent phosphoglycerate mutase family. A-PGAM subfamily.

The enzyme catalyses (2R)-2-phosphoglycerate = (2R)-3-phosphoglycerate. Its pathway is carbohydrate degradation; glycolysis; pyruvate from D-glyceraldehyde 3-phosphate: step 3/5. In terms of biological role, catalyzes the interconversion of 2-phosphoglycerate and 3-phosphoglycerate. The sequence is that of 2,3-bisphosphoglycerate-independent phosphoglycerate mutase (apgM) from Pyrococcus horikoshii (strain ATCC 700860 / DSM 12428 / JCM 9974 / NBRC 100139 / OT-3).